The chain runs to 256 residues: Phosphonates import ATP-binding protein PhnC (256 aa).

The region spanning 2-246 (LKVIQLDKTY…VLQHIYRQPD (245 aa)) is the ABC transporter domain. 35–42 (GPSGAGKT) is a binding site for ATP.

The protein belongs to the ABC transporter superfamily. Phosphonates importer (TC 3.A.1.9.1) family. As to quaternary structure, the complex is composed of two ATP-binding proteins (PhnC), two transmembrane proteins (PhnE) and a solute-binding protein (PhnD).

Its subcellular location is the cell membrane. The catalysed reaction is phosphonate(out) + ATP + H2O = phosphonate(in) + ADP + phosphate + H(+). Functionally, part of the ABC transporter complex PhnCDE involved in phosphonates import. Responsible for energy coupling to the transport system. The chain is Phosphonates import ATP-binding protein PhnC from Lactiplantibacillus plantarum (strain ATCC BAA-793 / NCIMB 8826 / WCFS1) (Lactobacillus plantarum).